Here is a 176-residue protein sequence, read N- to C-terminus: Protein GrpE (176 aa).

This sequence belongs to the GrpE family. In terms of assembly, homodimer.

The protein localises to the cytoplasm. Participates actively in the response to hyperosmotic and heat shock by preventing the aggregation of stress-denatured proteins, in association with DnaK and GrpE. It is the nucleotide exchange factor for DnaK and may function as a thermosensor. Unfolded proteins bind initially to DnaJ; upon interaction with the DnaJ-bound protein, DnaK hydrolyzes its bound ATP, resulting in the formation of a stable complex. GrpE releases ADP from DnaK; ATP binding to DnaK triggers the release of the substrate protein, thus completing the reaction cycle. Several rounds of ATP-dependent interactions between DnaJ, DnaK and GrpE are required for fully efficient folding. The polypeptide is Protein GrpE (Meiothermus ruber).